The chain runs to 110 residues: MEAIAKHNFARISPQKARLVADLIRGKSVDQALEILTFSNKKAAALVKKVLESAIANAEHNEGADIDDLNVAKIFVDEGPTMKRIMPRAKGRADRILKRSSHITVVVADR.

The protein belongs to the universal ribosomal protein uL22 family. As to quaternary structure, part of the 50S ribosomal subunit.

Functionally, this protein binds specifically to 23S rRNA; its binding is stimulated by other ribosomal proteins, e.g. L4, L17, and L20. It is important during the early stages of 50S assembly. It makes multiple contacts with different domains of the 23S rRNA in the assembled 50S subunit and ribosome. In terms of biological role, the globular domain of the protein is located near the polypeptide exit tunnel on the outside of the subunit, while an extended beta-hairpin is found that lines the wall of the exit tunnel in the center of the 70S ribosome. The sequence is that of Large ribosomal subunit protein uL22 from Vibrio parahaemolyticus serotype O3:K6 (strain RIMD 2210633).